The following is a 213-amino-acid chain: 3-dehydroquinate dehydratase (213 aa).

Residues 27-29 and Arg53 each bind 3-dehydroquinate; that span reads EVR. Catalysis depends on His111, which acts as the Proton donor/acceptor. The active-site Schiff-base intermediate with substrate is Lys138. Residues Arg175 and Gln197 each contribute to the 3-dehydroquinate site.

This sequence belongs to the type-I 3-dehydroquinase family. Homodimer.

It carries out the reaction 3-dehydroquinate = 3-dehydroshikimate + H2O. It participates in metabolic intermediate biosynthesis; chorismate biosynthesis; chorismate from D-erythrose 4-phosphate and phosphoenolpyruvate: step 3/7. Its function is as follows. Involved in the third step of the chorismate pathway, which leads to the biosynthesis of aromatic amino acids. Catalyzes the cis-dehydration of 3-dehydroquinate (DHQ) and introduces the first double bond of the aromatic ring to yield 3-dehydroshikimate. This is 3-dehydroquinate dehydratase from Thermococcus gammatolerans (strain DSM 15229 / JCM 11827 / EJ3).